Consider the following 210-residue polypeptide: MSSAQNIKKSILAPVLDNNPIALQVLGVCSALAVTTKLETAFVMTLAVTFVTALSNFFVSLIRNHIPNSVRIIVQMAIIASLVIVVDQILKAYLYDISKQLSVFVGLIITNCIVMGRAEAFAMKSAPVPSLIDGIGNGLGYGFVLITVGFFRELFGSGKLFGMEVLPLVNNGGWYQPNGLMLLAPSAFFLIGFMIWAIRTFKPEQVEAKE.

Helical transmembrane passes span 42-62 (FVMTLAVTFVTALSNFFVSLI), 72-92 (IIVQMAIIASLVIVVDQILKA), 103-123 (VFVGLIITNCIVMGRAEAFAM), 131-151 (LIDGIGNGLGYGFVLITVGFF), and 178-198 (NGLMLLAPSAFFLIGFMIWAI).

Belongs to the NqrDE/RnfAE family. As to quaternary structure, composed of six subunits; NqrA, NqrB, NqrC, NqrD, NqrE and NqrF.

It is found in the cell inner membrane. The catalysed reaction is a ubiquinone + n Na(+)(in) + NADH + H(+) = a ubiquinol + n Na(+)(out) + NAD(+). Its function is as follows. NQR complex catalyzes the reduction of ubiquinone-1 to ubiquinol by two successive reactions, coupled with the transport of Na(+) ions from the cytoplasm to the periplasm. NqrA to NqrE are probably involved in the second step, the conversion of ubisemiquinone to ubiquinol. In Vibrio vulnificus (strain CMCP6), this protein is Na(+)-translocating NADH-quinone reductase subunit D.